A 75-amino-acid polypeptide reads, in one-letter code: Large ribosomal subunit protein bL31 (75 aa).

This sequence belongs to the bacterial ribosomal protein bL31 family. Type A subfamily. In terms of assembly, part of the 50S ribosomal subunit.

Its function is as follows. Binds the 23S rRNA. This Rhodopseudomonas palustris (strain BisB18) protein is Large ribosomal subunit protein bL31.